The sequence spans 77 residues: Immune protein Tsi2 (77 aa).

In terms of assembly, forms a heterotetramer with Tse2 consisting of two Tse2 dimers and two Tsi2 dimers. Formation of the complex inactivates Tse2 enzymatic activity.

Immunity protein that plays a role in preventing early activation of toxin Tse2. Binds to a large surface of Tse2 and thereby occludes the active site to specifically inhibits Tse2. This is Immune protein Tsi2 from Pseudomonas aeruginosa (strain ATCC 15692 / DSM 22644 / CIP 104116 / JCM 14847 / LMG 12228 / 1C / PRS 101 / PAO1).